The following is a 542-amino-acid chain: Protein DETOXIFICATION 34 (542 aa).

Helical transmembrane passes span 97–117, 127–147, 176–196, 204–224, 240–260, 272–292, 316–336, 344–364, 390–410, 435–455, 462–482, and 491–511; these read APIAFNILCNYGVNSFTSIFV, AVAIALSVVSNFSFGFLLGMA, ILLGTSVCLLPLYIYATPLLI, IAEISGKFTTQIIPQMFALAI, IMAWIGFFALTLHIFILYLFI, AAFDVSAWGIAIAQVVYVVGW, FASAVMLCLEIWYFMTIIVLT, IAVGSLSICMNINGWEGMLFI, VIVTVIESLVIGVVCAIVILI, LLGITMILNSLQPVISGVAVG, VAYINLFCYYAFGLPLGFLLG, and GIWIGMICGTSLQTLILLYMI.

The protein belongs to the multi antimicrobial extrusion (MATE) (TC 2.A.66.1) family.

It is found in the membrane. This chain is Protein DETOXIFICATION 34, found in Arabidopsis thaliana (Mouse-ear cress).